Consider the following 1491-residue polypeptide: CLIP-associating protein (1491 aa).

HEAT repeat units lie at residues 44-82, 85-123, 163-201, and 402-440; these read CTDM…RLGS, NAYT…HRVL, QLSV…HVGD, and DAFC…YTHA. 2 disordered regions span residues 537 to 586 and 600 to 739; these read RERE…AVDT and LYSR…NNPV. The segment covering 542–551 has biased composition (gly residues); the sequence is GGGGGTGTGT. A compositionally biased stretch (polar residues) spans 569 to 580; it reads GTLQKPTPSMRS. 3 positions are modified to phosphoserine: serine 582, serine 626, and serine 634. The segment covering 632–646 has biased composition (polar residues); it reads LNSNSGGTPATTPGS. Threonine 648 is modified (phosphothreonine). Polar residues-rich tracts occupy residues 657–671 and 699–712; these read VSQS…SPST and PRST…SPTR. Residues serine 806, serine 817, serine 820, serine 822, and serine 824 each carry the phosphoserine modification. HEAT repeat units follow at residues 874-912 and 955-993; these read QQQL…VHAN and QLQL…TYCK. Disordered stretches follow at residues 1065–1127 and 1167–1205; these read HMRR…SVEQ and GHLQ…ESAT. Composition is skewed to low complexity over residues 1070-1097, 1111-1124, and 1181-1200; these read SQSC…QSPS, LSIS…RQSS, and ASLS…QSNT. Phosphoserine is present on residues serine 1120, serine 1123, and serine 1124. HEAT repeat units follow at residues 1289–1327 and 1408–1446; these read NKHF…SNKM and DAHL…VLGE.

The protein belongs to the CLASP family. Interacts with CLIP-190 and microtubules. Expressed in testis and ovary.

The protein localises to the cytoplasm. It localises to the cytoskeleton. Its subcellular location is the nucleus. The protein resides in the microtubule organizing center. It is found in the centrosome. The protein localises to the spindle. It localises to the cell projection. Its subcellular location is the growth cone. The protein resides in the cleavage furrow. In terms of biological role, microtubule plus-end tracking protein that promotes the stabilization of dynamic microtubules. Required for several aspects of mitotic spindle formation including the formation of the overlapping central spindle microtubules and kinetochore attachment. Required for the incorporation of tubulin subunits at the plus ends of kinetochore microtubules during poleward microtubule flux. Acts antagonistically to Klp10A and Klp67A to maintain metaphase spindle length. Also required for guidance of CNS axons downstream of Abl. May function to identify a subset of microtubules that probe the peripheral growth cone domain, where guidance signals exert their influence on cytoskeletal organization. Also required during oogenesis for the organization of the polarized microtubule network inside the 16-cell cyst that ensures oocyte differentiation. This chain is CLIP-associating protein (chb), found in Drosophila melanogaster (Fruit fly).